The chain runs to 696 residues: Zinc finger SWIM domain-containing protein 3 (696 aa).

An SWIM-type zinc finger spans residues valine 531–glutamine 572.

This chain is Zinc finger SWIM domain-containing protein 3 (ZSWIM3), found in Homo sapiens (Human).